A 232-amino-acid chain; its full sequence is 7-cyano-7-deazaguanine synthase (232 aa).

8 to 18 (FSGGQDSTTCL) provides a ligand contact to ATP. Residues Cys-189, Cys-198, Cys-201, and Cys-204 each coordinate Zn(2+).

The protein belongs to the QueC family. The cofactor is Zn(2+).

It catalyses the reaction 7-carboxy-7-deazaguanine + NH4(+) + ATP = 7-cyano-7-deazaguanine + ADP + phosphate + H2O + H(+). The protein operates within purine metabolism; 7-cyano-7-deazaguanine biosynthesis. Catalyzes the ATP-dependent conversion of 7-carboxy-7-deazaguanine (CDG) to 7-cyano-7-deazaguanine (preQ(0)). The chain is 7-cyano-7-deazaguanine synthase from Serratia proteamaculans (strain 568).